An 89-amino-acid polypeptide reads, in one-letter code: Small ribosomal subunit protein uS15 (89 aa).

It belongs to the universal ribosomal protein uS15 family. As to quaternary structure, part of the 30S ribosomal subunit. Forms a bridge to the 50S subunit in the 70S ribosome, contacting the 23S rRNA.

Functionally, one of the primary rRNA binding proteins, it binds directly to 16S rRNA where it helps nucleate assembly of the platform of the 30S subunit by binding and bridging several RNA helices of the 16S rRNA. Forms an intersubunit bridge (bridge B4) with the 23S rRNA of the 50S subunit in the ribosome. The polypeptide is Small ribosomal subunit protein uS15 (Dechloromonas aromatica (strain RCB)).